The following is a 146-amino-acid chain: Small ribosomal subunit protein uS9 (146 aa).

It belongs to the universal ribosomal protein uS9 family. Component of the small ribosomal subunit.

It localises to the cytoplasm. In terms of biological role, component of the small ribosomal subunit. The ribosome is a large ribonucleoprotein complex responsible for the synthesis of proteins in the cell. The protein is Small ribosomal subunit protein uS9 (rps16) of Ictalurus punctatus (Channel catfish).